The sequence spans 208 residues: Large ribosomal subunit protein uL3 (208 aa).

This sequence belongs to the universal ribosomal protein uL3 family. Part of the 50S ribosomal subunit. Forms a cluster with proteins L14 and L19.

Functionally, one of the primary rRNA binding proteins, it binds directly near the 3'-end of the 23S rRNA, where it nucleates assembly of the 50S subunit. This chain is Large ribosomal subunit protein uL3, found in Salinibacter ruber (strain DSM 13855 / M31).